We begin with the raw amino-acid sequence, 181 residues long: Adenine phosphoribosyltransferase (181 aa).

This sequence belongs to the purine/pyrimidine phosphoribosyltransferase family. Homodimer.

Its subcellular location is the cytoplasm. It carries out the reaction AMP + diphosphate = 5-phospho-alpha-D-ribose 1-diphosphate + adenine. Its pathway is purine metabolism; AMP biosynthesis via salvage pathway; AMP from adenine: step 1/1. In terms of biological role, catalyzes a salvage reaction resulting in the formation of AMP, that is energically less costly than de novo synthesis. This Mesorhizobium japonicum (strain LMG 29417 / CECT 9101 / MAFF 303099) (Mesorhizobium loti (strain MAFF 303099)) protein is Adenine phosphoribosyltransferase.